Consider the following 348-residue polypeptide: MTYNIVALPGDGIGPEILNGSLSLLEIISNKYNFNYQIEHHEFGGASIDTFGEPLTEKTLNACKRADAILLGAIGGPKWTDPNNRPEQGLLKLRKSLNLFANIRPTTVVKGASSLSPLKEERVEGKDLVIVRELTSGIYFGEPRHFNNHEALDSLTYTREEIERIVHVAFKLAASRRGKLTSVDKENVLASSKLWRKVVNEVSQLYPEVTVNHLLVDACSMHLITNPKQFDVIVCENLFGDILSDEASVIPGSLGLSPSASFSNDGPRLYEPIHGSAPDIAGKNVANPFGMILSLAMCLRESLNQPDAADELEQHIYNMIEHGQTTADLGGKLNTTDIFEILSQKLNH.

An NAD(+)-binding site is contributed by 76–87; the sequence is GPKWTDPNNRPE. Arginine 94, arginine 104, arginine 132, and aspartate 217 together coordinate substrate. Positions 217, 241, and 245 each coordinate Mg(2+). NAD(+) is bound at residue 275-287; the sequence is GSAPDIAGKNVAN.

Belongs to the isocitrate and isopropylmalate dehydrogenases family. LeuB type 1 subfamily. As to quaternary structure, homodimer. Mg(2+) is required as a cofactor. Mn(2+) serves as cofactor.

It is found in the cytoplasm. It carries out the reaction (2R,3S)-3-isopropylmalate + NAD(+) = 4-methyl-2-oxopentanoate + CO2 + NADH. Its pathway is amino-acid biosynthesis; L-leucine biosynthesis; L-leucine from 3-methyl-2-oxobutanoate: step 3/4. In terms of biological role, catalyzes the oxidation of 3-carboxy-2-hydroxy-4-methylpentanoate (3-isopropylmalate) to 3-carboxy-4-methyl-2-oxopentanoate. The product decarboxylates to 4-methyl-2 oxopentanoate. This chain is 3-isopropylmalate dehydrogenase, found in Staphylococcus aureus (strain MW2).